Here is a 332-residue protein sequence, read N- to C-terminus: Gibberellin 2-beta-dioxygenase (332 aa).

Residues 175-280 (KSDSCFRLNH…RLSMIYFGGP (106 aa)) enclose the Fe2OG dioxygenase domain. 3 residues coordinate Fe cation: His-204, Asp-206, and His-261. Arg-271 is an active-site residue.

Belongs to the iron/ascorbate-dependent oxidoreductase family. GA2OX subfamily. Requires Fe cation as cofactor.

The catalysed reaction is gibberellin A1 + 2-oxoglutarate + O2 = gibberellin A8 + succinate + CO2. It participates in plant hormone biosynthesis; gibberellin biosynthesis. In terms of biological role, catalyzes the 2-beta-hydroxylation of several biologically active gibberellins, leading to the homeostatic regulation of their endogenous level. Catabolism of gibberellins (GAs) plays a central role in plant development. Converts GA9/GA20 to GA51/GA29 and GA4/GA1 to GA34/GA8. The chain is Gibberellin 2-beta-dioxygenase (GA2OX1) from Phaseolus coccineus (Scarlet runner bean).